Reading from the N-terminus, the 287-residue chain is Pyridoxal kinase PdxY (287 aa).

Residues Ser-9 and 44–45 (MQ) contribute to the substrate site. ATP contacts are provided by Asp-111, Ala-142, Glu-147, and Lys-180. Asp-221 lines the substrate pocket.

This sequence belongs to the pyridoxine kinase family. PdxY subfamily. In terms of assembly, homodimer. Mg(2+) serves as cofactor.

The enzyme catalyses pyridoxal + ATP = pyridoxal 5'-phosphate + ADP + H(+). Its pathway is cofactor metabolism; pyridoxal 5'-phosphate salvage; pyridoxal 5'-phosphate from pyridoxal: step 1/1. In terms of biological role, pyridoxal kinase involved in the salvage pathway of pyridoxal 5'-phosphate (PLP). Catalyzes the phosphorylation of pyridoxal to PLP. In Burkholderia pseudomallei (strain K96243), this protein is Pyridoxal kinase PdxY.